Here is a 711-residue protein sequence, read N- to C-terminus: Polyribonucleotide nucleotidyltransferase (711 aa).

Residues 77–80 are FFRR loop; important for RNA binding; it reads FFRR. The tract at residues 327–331 is interaction with RNase E; sequence LDVRT. Aspartate 486 and aspartate 492 together coordinate Mg(2+). One can recognise a KH domain in the interval 553–612; sequence PRIHTIKINPDKIKDVIGKGGSVIRALTEETGTTIEIEDDGTVKIAATDGEKAKHAIRRI. Residues 622–690 form the S1 motif domain; sequence GRVYTGKVTR…RQGRIRLSIK (69 aa). Residues 689 to 711 are disordered; sequence IKEATEQSQPAAAPEAPAAEQGE. Residues 694-711 show a composition bias toward low complexity; it reads EQSQPAAAPEAPAAEQGE.

This sequence belongs to the polyribonucleotide nucleotidyltransferase family. Component of the RNA degradosome, which is a multiprotein complex involved in RNA processing and mRNA degradation. Interacts with RNase E (rne). Homotrimer. The homotrimer forms a ring-like structure with a central channel, where RNA molecules can bind. RNA molecules bind between neighboring subunits. Might interact with YicC. Mg(2+) serves as cofactor. Mn(2+) is required as a cofactor.

It is found in the cytoplasm. The enzyme catalyses RNA(n+1) + phosphate = RNA(n) + a ribonucleoside 5'-diphosphate. Involved in mRNA degradation. Catalyzes the phosphorolysis of single-stranded polyribonucleotides processively in the 3'- to 5'-direction. Also involved, along with RNase II, in tRNA processing. RNases II and R contribute to rRNA degradation during starvation, while RNase R and PNPase are the major contributors to quality control of rRNA during steady state growth. Contributes to degradation of some small RNAs (sRNA). The protein is Polyribonucleotide nucleotidyltransferase of Escherichia coli (strain K12).